Reading from the N-terminus, the 243-residue chain is 4-hydroxy-tetrahydrodipicolinate reductase (243 aa).

Residues glycine 9 to methionine 14, glycine 78 to serine 80, and alanine 104 to phenylalanine 107 contribute to the NAD(+) site. Histidine 134 acts as the Proton donor/acceptor in catalysis. Histidine 135 is a (S)-2,3,4,5-tetrahydrodipicolinate binding site. Lysine 138 serves as the catalytic Proton donor. Glycine 144 to threonine 145 is a binding site for (S)-2,3,4,5-tetrahydrodipicolinate.

This sequence belongs to the DapB family.

It localises to the cytoplasm. The catalysed reaction is (S)-2,3,4,5-tetrahydrodipicolinate + NAD(+) + H2O = (2S,4S)-4-hydroxy-2,3,4,5-tetrahydrodipicolinate + NADH + H(+). It carries out the reaction (S)-2,3,4,5-tetrahydrodipicolinate + NADP(+) + H2O = (2S,4S)-4-hydroxy-2,3,4,5-tetrahydrodipicolinate + NADPH + H(+). It participates in amino-acid biosynthesis; L-lysine biosynthesis via DAP pathway; (S)-tetrahydrodipicolinate from L-aspartate: step 4/4. Catalyzes the conversion of 4-hydroxy-tetrahydrodipicolinate (HTPA) to tetrahydrodipicolinate. The protein is 4-hydroxy-tetrahydrodipicolinate reductase of Legionella pneumophila subsp. pneumophila (strain Philadelphia 1 / ATCC 33152 / DSM 7513).